We begin with the raw amino-acid sequence, 325 residues long: Elongation factor P--(R)-beta-lysine ligase (325 aa).

Residue 76 to 78 (SPE) coordinates substrate. ATP is bound by residues 100–102 (RNE) and N109. Y118 lines the substrate pocket. 244 to 245 (EL) serves as a coordination point for ATP. E251 serves as a coordination point for substrate. G300 lines the ATP pocket.

It belongs to the class-II aminoacyl-tRNA synthetase family. EpmA subfamily. In terms of assembly, homodimer.

It carries out the reaction D-beta-lysine + L-lysyl-[protein] + ATP = N(6)-((3R)-3,6-diaminohexanoyl)-L-lysyl-[protein] + AMP + diphosphate + H(+). With EpmB is involved in the beta-lysylation step of the post-translational modification of translation elongation factor P (EF-P). Catalyzes the ATP-dependent activation of (R)-beta-lysine produced by EpmB, forming a lysyl-adenylate, from which the beta-lysyl moiety is then transferred to the epsilon-amino group of a conserved specific lysine residue in EF-P. The protein is Elongation factor P--(R)-beta-lysine ligase of Enterobacter sp. (strain 638).